The following is a 420-amino-acid chain: UDP-N-acetyl-D-mannosamine dehydrogenase (420 aa).

NAD(+) contacts are provided by Y13, I14, D33, T85, and T126. Residues R160, V161, K212, N216, R219, H250, R252, and G263 each contribute to the UDP-N-acetyl-alpha-D-mannosaminouronate site. The active-site Proton donor/acceptor is K212. Residue C266 is the Nucleophile of the active site. UDP-N-acetyl-alpha-D-mannosaminouronate is bound by residues F330 and K331. R338 serves as a coordination point for NAD(+). K416 contributes to the UDP-N-acetyl-alpha-D-mannosaminouronate binding site.

Belongs to the UDP-glucose/GDP-mannose dehydrogenase family. WecC subfamily. In terms of assembly, homodimer.

The enzyme catalyses UDP-N-acetyl-alpha-D-mannosamine + 2 NAD(+) + H2O = UDP-N-acetyl-alpha-D-mannosaminouronate + 2 NADH + 3 H(+). The protein operates within bacterial outer membrane biogenesis; enterobacterial common antigen biosynthesis. Functionally, catalyzes the four-electron oxidation of UDP-N-acetyl-D-mannosamine (UDP-ManNAc), reducing NAD(+) and releasing UDP-N-acetylmannosaminuronic acid (UDP-ManNAcA). This Salmonella typhi protein is UDP-N-acetyl-D-mannosamine dehydrogenase.